Reading from the N-terminus, the 375-residue chain is tRNA-specific 2-thiouridylase MnmA (375 aa).

ATP-binding positions include 12-19 (GMSGGVDS) and M38. The tract at residues 98–100 (NPD) is interaction with target base in tRNA. The Nucleophile role is filled by C103. An intrachain disulfide couples C103 to C200. An ATP-binding site is contributed by G127. The interaction with tRNA stretch occupies residues 150–152 (KDQ). The active-site Cysteine persulfide intermediate is C200. The interaction with tRNA stretch occupies residues 312–313 (RY).

The protein belongs to the MnmA/TRMU family.

The protein localises to the cytoplasm. It carries out the reaction S-sulfanyl-L-cysteinyl-[protein] + uridine(34) in tRNA + AH2 + ATP = 2-thiouridine(34) in tRNA + L-cysteinyl-[protein] + A + AMP + diphosphate + H(+). Functionally, catalyzes the 2-thiolation of uridine at the wobble position (U34) of tRNA, leading to the formation of s(2)U34. The chain is tRNA-specific 2-thiouridylase MnmA from Ligilactobacillus salivarius (strain UCC118) (Lactobacillus salivarius).